The following is a 115-amino-acid chain: Gp30 (115 aa).

The polypeptide is Gp30 (Haloferax tailed virus 1 (HFTV1)).